The primary structure comprises 524 residues: GMP synthase [glutamine-hydrolyzing] (524 aa).

One can recognise a Glutamine amidotransferase type-1 domain in the interval 12 to 201 (TILVLDFGSQ…AVDICKASQS (190 aa)). Cysteine 88 acts as the Nucleophile in catalysis. Active-site residues include histidine 175 and glutamate 177. The GMPS ATP-PPase domain occupies 202–399 (WNMENFIDTE…LGISHELVWR (198 aa)). ATP is bound at residue 230-236 (SGGVDST). XMP-binding residues include arginine 303, aspartate 461, lysine 516, and glutamate 522.

In terms of assembly, homodimer. Mg(2+) is required as a cofactor.

It is found in the cytoplasm. It localises to the cytosol. The enzyme catalyses XMP + L-glutamine + ATP + H2O = GMP + L-glutamate + AMP + diphosphate + 2 H(+). The protein operates within purine metabolism; GMP biosynthesis; GMP from XMP (L-Gln route): step 1/1. In terms of biological role, catalyzes the conversion of xanthine monophosphate (XMP) to GMP in the presence of glutamine and ATP through an adenyl-XMP intermediate. The sequence is that of GMP synthase [glutamine-hydrolyzing] (GUA1) from Kluyveromyces lactis (strain ATCC 8585 / CBS 2359 / DSM 70799 / NBRC 1267 / NRRL Y-1140 / WM37) (Yeast).